A 101-amino-acid polypeptide reads, in one-letter code: RNA-binding protein Hfq (101 aa).

A Sm domain is found at 9–68; sequence DPFLNALRRERVPVSIYLVNGIKLQGQVESFDQFVILLKNTVSQMVYKHAISTVVPSRPV. Positions 63 to 101 are disordered; it reads VPSRPVSHHSNNPSGSTNNYHGSNPSAPQQPQQDSDDAE. The segment covering 70-86 has biased composition (polar residues); it reads HHSNNPSGSTNNYHGSN.

It belongs to the Hfq family. As to quaternary structure, homohexamer.

In terms of biological role, RNA chaperone that binds small regulatory RNA (sRNAs) and mRNAs to facilitate mRNA translational regulation in response to envelope stress, environmental stress and changes in metabolite concentrations. Also binds with high specificity to tRNAs. Positively regulates the expression of the yst gene for heat-stable enterotoxin (Y-ST). The sequence is that of RNA-binding protein Hfq from Yersinia enterocolitica.